Here is a 130-residue protein sequence, read N- to C-terminus: Lipoprotein LpqS (130 aa).

An N-terminal signal peptide occupies residues 1-23; sequence MVWMRSAIVAVALGVTVAAVAAA. C24 carries N-palmitoyl cysteine lipidation. A lipid anchor (S-diacylglycerol cysteine) is attached at C24.

The protein localises to the cell membrane. In terms of biological role, may play an essential role in M.tuberculosis replication and survival inside the host cell. This chain is Lipoprotein LpqS, found in Mycobacterium tuberculosis (strain ATCC 25618 / H37Rv).